We begin with the raw amino-acid sequence, 353 residues long: UPF0283 membrane protein YcjF (353 aa).

Basic and acidic residues predominate over residues 1 to 19 (MSEPLKPRIDFAEPLKEEP). Residues 1–35 (MSEPLKPRIDFAEPLKEEPTSAFKAQQTFSEAESR) are disordered. A run of 3 helical transmembrane segments spans residues 70–90 (MVMG…VQWT), 100–120 (VALG…GSVV), and 213–233 (ESTL…FIAW).

The protein belongs to the UPF0283 family.

The protein resides in the cell inner membrane. The chain is UPF0283 membrane protein YcjF from Salmonella paratyphi C (strain RKS4594).